Consider the following 75-residue polypeptide: Small ribosomal subunit protein bS18 (75 aa).

This sequence belongs to the bacterial ribosomal protein bS18 family. As to quaternary structure, part of the 30S ribosomal subunit. Forms a tight heterodimer with protein bS6.

In terms of biological role, binds as a heterodimer with protein bS6 to the central domain of the 16S rRNA, where it helps stabilize the platform of the 30S subunit. The protein is Small ribosomal subunit protein bS18 of Laribacter hongkongensis (strain HLHK9).